The following is a 349-amino-acid chain: Putative methylesterase 12, chloroplastic (349 aa).

The N-terminal 77 residues, Met1–Leu77, are a transit peptide targeting the chloroplast. Residues Gly61 to Ser80 form a disordered region. Ser173 serves as the catalytic Acyl-ester intermediate. Catalysis depends on charge relay system residues Asp300 and His328.

This sequence belongs to the AB hydrolase superfamily. Methylesterase family.

The protein resides in the plastid. It localises to the chloroplast. Its function is as follows. Putative methylesterase. In Arabidopsis thaliana (Mouse-ear cress), this protein is Putative methylesterase 12, chloroplastic.